A 347-amino-acid polypeptide reads, in one-letter code: Probable dual-specificity RNA methyltransferase RlmN (347 aa).

The active-site Proton acceptor is E91. The Radical SAM core domain maps to 97 to 327 (YKYGNSICVS…ATVRREMGSD (231 aa)). C104 and C332 form a disulfide bridge. [4Fe-4S] cluster contacts are provided by C111, C115, and C118. Residues 158 to 159 (GE), S190, 213 to 215 (SLH), and N289 each bind S-adenosyl-L-methionine. C332 (S-methylcysteine intermediate) is an active-site residue.

The protein belongs to the radical SAM superfamily. RlmN family. Requires [4Fe-4S] cluster as cofactor.

Its subcellular location is the cytoplasm. It catalyses the reaction adenosine(2503) in 23S rRNA + 2 reduced [2Fe-2S]-[ferredoxin] + 2 S-adenosyl-L-methionine = 2-methyladenosine(2503) in 23S rRNA + 5'-deoxyadenosine + L-methionine + 2 oxidized [2Fe-2S]-[ferredoxin] + S-adenosyl-L-homocysteine. The catalysed reaction is adenosine(37) in tRNA + 2 reduced [2Fe-2S]-[ferredoxin] + 2 S-adenosyl-L-methionine = 2-methyladenosine(37) in tRNA + 5'-deoxyadenosine + L-methionine + 2 oxidized [2Fe-2S]-[ferredoxin] + S-adenosyl-L-homocysteine. Its function is as follows. Specifically methylates position 2 of adenine 2503 in 23S rRNA and position 2 of adenine 37 in tRNAs. The polypeptide is Probable dual-specificity RNA methyltransferase RlmN (Clostridium perfringens (strain SM101 / Type A)).